The primary structure comprises 171 residues: MEDLKSIIRNIPDFPKKGILFKDITTLLGDAKSFQRMVDLLSHRYVGQKIDKVVGVEARGFIIGAALAYKLGAGIVLVRKPGKLPSKTRSKTYDLEYGTDTLEIHTDAFNKGDRVLIADDLLATGGTMAAVVDLISSMDVELVECCFMAELEFLEGGKKLPEGKVFSLLKF.

It belongs to the purine/pyrimidine phosphoribosyltransferase family. In terms of assembly, homodimer.

It localises to the cytoplasm. The catalysed reaction is AMP + diphosphate = 5-phospho-alpha-D-ribose 1-diphosphate + adenine. The protein operates within purine metabolism; AMP biosynthesis via salvage pathway; AMP from adenine: step 1/1. Catalyzes a salvage reaction resulting in the formation of AMP, that is energically less costly than de novo synthesis. This Citrifermentans bemidjiense (strain ATCC BAA-1014 / DSM 16622 / JCM 12645 / Bem) (Geobacter bemidjiensis) protein is Adenine phosphoribosyltransferase.